Here is a 160-residue protein sequence, read N- to C-terminus: SsrA-binding protein (160 aa).

A disordered region spans residues 134 to 160 (RKAHDKREAVKERDWNRDKARLMRDRG). Residues 138-160 (DKREAVKERDWNRDKARLMRDRG) are compositionally biased toward basic and acidic residues.

Belongs to the SmpB family.

It localises to the cytoplasm. Its function is as follows. Required for rescue of stalled ribosomes mediated by trans-translation. Binds to transfer-messenger RNA (tmRNA), required for stable association of tmRNA with ribosomes. tmRNA and SmpB together mimic tRNA shape, replacing the anticodon stem-loop with SmpB. tmRNA is encoded by the ssrA gene; the 2 termini fold to resemble tRNA(Ala) and it encodes a 'tag peptide', a short internal open reading frame. During trans-translation Ala-aminoacylated tmRNA acts like a tRNA, entering the A-site of stalled ribosomes, displacing the stalled mRNA. The ribosome then switches to translate the ORF on the tmRNA; the nascent peptide is terminated with the 'tag peptide' encoded by the tmRNA and targeted for degradation. The ribosome is freed to recommence translation, which seems to be the essential function of trans-translation. This Azorhizobium caulinodans (strain ATCC 43989 / DSM 5975 / JCM 20966 / LMG 6465 / NBRC 14845 / NCIMB 13405 / ORS 571) protein is SsrA-binding protein.